The sequence spans 90 residues: Probable Fe(2+)-trafficking protein (90 aa).

This sequence belongs to the Fe(2+)-trafficking protein family.

Could be a mediator in iron transactions between iron acquisition and iron-requiring processes, such as synthesis and/or repair of Fe-S clusters in biosynthetic enzymes. The protein is Probable Fe(2+)-trafficking protein of Polaromonas sp. (strain JS666 / ATCC BAA-500).